A 231-amino-acid polypeptide reads, in one-letter code: Protein HHL1, chloroplastic (231 aa).

A chloroplast-targeting transit peptide spans 1–39 (MEVSMSLNALTRLPLKNTGRFEEVGLARHSLFSSRTACR). A helical membrane pass occupies residues 93–113 (YLWYPLSIIAGGTTAKIMVAA). Residues 206-231 (SFGKLSSLNPGSDEKTEETSDEKAKA) form a disordered region. Residues 217 to 231 (SDEKTEETSDEKAKA) show a composition bias toward basic and acidic residues.

As to quaternary structure, interacts with psbB, psbC and LQY1, but not with psbA or psbD.

It localises to the plastid. The protein resides in the chloroplast thylakoid membrane. Involved in photoprotection. Forms a complex with LQY1 that is involved in the repair and reassembly cycle of the PSII-LHCII supercomplex under high-light conditions. May function in guiding the release of psbC from PSII core monomers. This chain is Protein HHL1, chloroplastic, found in Arabidopsis thaliana (Mouse-ear cress).